We begin with the raw amino-acid sequence, 427 residues long: Hydroxylamine reductase (427 aa).

4 residues coordinate [4Fe-4S] cluster: cysteine 3, cysteine 6, cysteine 15, and cysteine 21. Histidine 129, glutamate 153, cysteine 197, cysteine 283, cysteine 311, cysteine 336, glutamate 370, and lysine 372 together coordinate hybrid [4Fe-2O-2S] cluster. Cysteine 283 is modified (cysteine persulfide).

The protein belongs to the HCP family. It depends on [4Fe-4S] cluster as a cofactor. The cofactor is hybrid [4Fe-2O-2S] cluster.

The protein resides in the cytoplasm. It catalyses the reaction A + NH4(+) + H2O = hydroxylamine + AH2 + H(+). Catalyzes the reduction of hydroxylamine to form NH(3) and H(2)O. In Methanothermobacter thermautotrophicus (strain ATCC 29096 / DSM 1053 / JCM 10044 / NBRC 100330 / Delta H) (Methanobacterium thermoautotrophicum), this protein is Hydroxylamine reductase.